A 223-amino-acid polypeptide reads, in one-letter code: MGQKVNPNGIRLGYIRDWRSTWYADSSSYATKLNEDIKVREFLHKKLAAAAVSKIQIERPAQNAKITIHTARPGIVIGKKGEDVEKLRAEVHKLMGIPVQINIEEVRKPEIDAKLVAESVAQQLEKRVMFRRAMKKAMQAAMKSGAKGIKIMVSGRLGGAEIARSEWARDGRVPLQTFRADVDYATAEALTTYGVIGVKVWIYKGEILPGQIAEKKNNKKGAK.

A KH type-2 domain is found at 39–107; the sequence is VREFLHKKLA…PVQINIEEVR (69 aa).

Belongs to the universal ribosomal protein uS3 family. As to quaternary structure, part of the 30S ribosomal subunit. Forms a tight complex with proteins S10 and S14.

In terms of biological role, binds the lower part of the 30S subunit head. Binds mRNA in the 70S ribosome, positioning it for translation. In Francisella tularensis subsp. novicida (strain U112), this protein is Small ribosomal subunit protein uS3.